The sequence spans 282 residues: Pantothenate synthetase (282 aa).

An ATP-binding site is contributed by Met-30 to His-37. The active-site Proton donor is His-37. Residue Gln-61 coordinates (R)-pantoate. A beta-alanine-binding site is contributed by Gln-61. Gly-148 to Asp-151 serves as a coordination point for ATP. Position 154 (Gln-154) interacts with (R)-pantoate. ATP is bound by residues Val-177 and Leu-185–Arg-188.

Belongs to the pantothenate synthetase family. Homodimer.

The protein resides in the cytoplasm. The catalysed reaction is (R)-pantoate + beta-alanine + ATP = (R)-pantothenate + AMP + diphosphate + H(+). It participates in cofactor biosynthesis; (R)-pantothenate biosynthesis; (R)-pantothenate from (R)-pantoate and beta-alanine: step 1/1. Its function is as follows. Catalyzes the condensation of pantoate with beta-alanine in an ATP-dependent reaction via a pantoyl-adenylate intermediate. This is Pantothenate synthetase from Acinetobacter baumannii (strain AB0057).